Here is a 305-residue protein sequence, read N- to C-terminus: Putative lipid kinase SAS0691 (305 aa).

Positions 3–139 constitute a DAGKc domain; that stretch reads NKYTHGVLFY…YDVIKINNQY (137 aa). ATP-binding positions include Ser-44, 74 to 80, and Thr-101; that span reads GDGTVNE. Positions 220, 223, and 225 each coordinate Mg(2+). Catalysis depends on Glu-281, which acts as the Proton acceptor.

The protein belongs to the diacylglycerol/lipid kinase family. It depends on Mg(2+) as a cofactor.

May catalyze the ATP-dependent phosphorylation of lipids other than diacylglycerol (DAG). The sequence is that of Putative lipid kinase SAS0691 from Staphylococcus aureus (strain MSSA476).